We begin with the raw amino-acid sequence, 188 residues long: Elongation factor P (188 aa).

The protein belongs to the elongation factor P family.

It localises to the cytoplasm. It functions in the pathway protein biosynthesis; polypeptide chain elongation. Involved in peptide bond synthesis. Stimulates efficient translation and peptide-bond synthesis on native or reconstituted 70S ribosomes in vitro. Probably functions indirectly by altering the affinity of the ribosome for aminoacyl-tRNA, thus increasing their reactivity as acceptors for peptidyl transferase. This Gluconacetobacter diazotrophicus (strain ATCC 49037 / DSM 5601 / CCUG 37298 / CIP 103539 / LMG 7603 / PAl5) protein is Elongation factor P.